Consider the following 394-residue polypeptide: METLAKRLDACQEQLLELYEEDSKHLEKHVQHWKCLRIEAALLFKAREMGYAQVGHQIVPALEISRAKAHVAIEIQLALETLLQSTFGTEPWTLQETSYEMWHAEPKKCLKKQGRTVEVVFDGNPENAMHYTAWTFIYVQTLDGTWCKVYGHVCYAGLYYIVDNMKQFYCNFKNEAKKYGVTGQWEVHDGTQVIVSPASISSTTTTEAEVSSSGLTELVQTTDLYNTTPTPTTITRSNCDPDGTDGILYKDPTPTTPPRKRYRQSLQPPTKHLQHYGVTNVPVDPGSQRVTSDNNNNQRRNPCGNQTTPVIHLQGDPNCLKCLRWRLKKNCSHLFTQVSSTWHLTEKDYTRDSKDGIITIHYYNEEQRDKFLSTVKLPPGIKSCIGYMSMLQFM.

Positions 1-201 (METLAKRLDA…QVIVSPASIS (201 aa)) are transactivation domain. Positions 226–235 (NTTPTPTTIT) are enriched in low complexity. The interval 226–309 (NTTPTPTTIT…RNPCGNQTTP (84 aa)) is disordered. The DNA-binding domain stretch occupies residues 307 to 394 (TTPVIHLQGD…IGYMSMLQFM (88 aa)).

The protein belongs to the papillomaviridae E2 protein family. As to quaternary structure, binds DNA as homodimer. Interacts with protein E1; this interaction greatly increases E1 DNA-binding activity. Interacts with protein L1; this interaction enhances E2-dependent replication and transcription activation. Interacts with protein L2; this interaction inhibits E2 transcriptional activity but not DNA replication function E2. Interacts with protein E7; this interaction inhibits E7 oncogenic activity. Interacts with host TAF1; this interaction modulates E2-dependent transcriptional regulation. Interacts with host BRD4; this interaction mediates E2 transcriptional activation function. Additionally, the interaction with host BRD4 on mitotic chromosomes mediates tethering of the viral genome. Interacts with host TOPBP1; this interaction is required for optimal viral DNA replication. In terms of processing, phosphorylated.

It is found in the host nucleus. In terms of biological role, plays a role in the initiation of viral DNA replication. A dimer of E2 interacts with a dimer of E1 in order to improve specificity of E1 DNA binding activity. Once the complex recognizes and binds DNA at specific sites, the E2 dimer is removed from DNA. E2 also regulates viral transcription through binding to the E2RE response element (5'-ACCNNNNNNGGT-3') present in multiple copies in the regulatory regions of the viral genome. Activates or represses transcription depending on E2RE's position with regards to proximal promoter elements including the TATA-box. Repression occurs by sterically hindering the assembly of the transcription initiation complex. This chain is Regulatory protein E2, found in Homo sapiens (Human).